Here is a 342-residue protein sequence, read N- to C-terminus: Putative ABC transporter anion-binding protein HVO_1888 (342 aa).

Residues 1–32 (MAIERRRFLQAAGVGAVLGLSGCTGNTSPPQA) constitute a signal peptide (tat-type signal). Residues 24–37 (TGNTSPPQANNETA) are compositionally biased toward polar residues. The disordered stretch occupies residues 24–52 (TGNTSPPQANNETAEGSGGSESGDGSTQE).

In terms of assembly, the complex is composed of two ATP-binding proteins (HVO_1886), two transmembrane proteins (HVO_1887) and a solute-binding protein (HVO_1888). Predicted to be exported by the Tat system. The position of the signal peptide cleavage has not been experimentally proven.

Functionally, part of an ABC transporter complex involved in anions import. This Haloferax volcanii (strain ATCC 29605 / DSM 3757 / JCM 8879 / NBRC 14742 / NCIMB 2012 / VKM B-1768 / DS2) (Halobacterium volcanii) protein is Putative ABC transporter anion-binding protein HVO_1888.